The chain runs to 371 residues: Serpentine receptor class delta-1 (371 aa).

7 helical membrane-spanning segments follow: residues 31-51, 62-82, 109-129, 148-168, 209-229, 267-287, and 295-315; these read LSEV…YVIF, AVLL…SLLA, CFFC…ILLI, MIVI…FYFW, IPSL…YFII, AIPI…FGII, and ITFR…FIFI. A disordered region spans residues 344 to 371; it reads EKFNQPPKQPTNPAQQSANNDAAKTEKV. A compositionally biased stretch (polar residues) spans 354 to 365; sequence TNPAQQSANNDA.

Belongs to the nematode receptor-like protein srd family.

Its subcellular location is the membrane. This is Serpentine receptor class delta-1 (srd-1) from Caenorhabditis elegans.